The chain runs to 550 residues: Arginine--tRNA ligase (550 aa).

Residues 130 to 140 (ANPTGPIHLGG) carry the 'HIGH' region motif.

It belongs to the class-I aminoacyl-tRNA synthetase family. As to quaternary structure, monomer.

It localises to the cytoplasm. The enzyme catalyses tRNA(Arg) + L-arginine + ATP = L-arginyl-tRNA(Arg) + AMP + diphosphate. The sequence is that of Arginine--tRNA ligase from Corynebacterium efficiens (strain DSM 44549 / YS-314 / AJ 12310 / JCM 11189 / NBRC 100395).